A 458-amino-acid polypeptide reads, in one-letter code: Ribosomal protein uS12 methylthiotransferase RimO (458 aa).

Residues 26-136 form the MTTase N-terminal domain; sequence PRIGMVSLGC…VLDAVHGAVP (111 aa). Residues cysteine 35, cysteine 71, cysteine 100, cysteine 167, cysteine 171, and cysteine 174 each contribute to the [4Fe-4S] cluster site. In terms of domain architecture, Radical SAM core spans 153–389; that stretch reads LTPRHYAYLK…MEKAQAISEA (237 aa). Positions 392–458 constitute a TRAM domain; it reads QAKVGRTMQV…SEYDLWGKLT (67 aa).

This sequence belongs to the methylthiotransferase family. RimO subfamily. Requires [4Fe-4S] cluster as cofactor.

The protein localises to the cytoplasm. The catalysed reaction is L-aspartate(89)-[ribosomal protein uS12]-hydrogen + (sulfur carrier)-SH + AH2 + 2 S-adenosyl-L-methionine = 3-methylsulfanyl-L-aspartate(89)-[ribosomal protein uS12]-hydrogen + (sulfur carrier)-H + 5'-deoxyadenosine + L-methionine + A + S-adenosyl-L-homocysteine + 2 H(+). Catalyzes the methylthiolation of an aspartic acid residue of ribosomal protein uS12. The sequence is that of Ribosomal protein uS12 methylthiotransferase RimO from Jannaschia sp. (strain CCS1).